The following is a 154-amino-acid chain: Lipoprotein signal peptidase (154 aa).

A run of 2 helical transmembrane segments spans residues isoleucine 52–valine 72 and leucine 85–valine 105. Active-site residues include aspartate 111 and aspartate 129. The chain crosses the membrane as a helical span at residues isoleucine 124 to leucine 144.

This sequence belongs to the peptidase A8 family.

The protein localises to the cell membrane. The catalysed reaction is Release of signal peptides from bacterial membrane prolipoproteins. Hydrolyzes -Xaa-Yaa-Zaa-|-(S,diacylglyceryl)Cys-, in which Xaa is hydrophobic (preferably Leu), and Yaa (Ala or Ser) and Zaa (Gly or Ala) have small, neutral side chains.. It participates in protein modification; lipoprotein biosynthesis (signal peptide cleavage). In terms of biological role, this protein specifically catalyzes the removal of signal peptides from prolipoproteins. The chain is Lipoprotein signal peptidase from Bacillus subtilis (strain 168).